A 192-amino-acid chain; its full sequence is NADH dehydrogenase [ubiquinone] iron-sulfur protein 3 (192 aa).

Belongs to the complex I 30 kDa subunit family. Complex I is composed of about 45 different subunits. This is a component of the iron-sulfur (IP) fragment of the enzyme.

Its subcellular location is the mitochondrion inner membrane. The catalysed reaction is a ubiquinone + NADH + 5 H(+)(in) = a ubiquinol + NAD(+) + 4 H(+)(out). In terms of biological role, core subunit of the mitochondrial membrane respiratory chain NADH dehydrogenase (Complex I) that is believed to belong to the minimal assembly required for catalysis. Complex I functions in the transfer of electrons from NADH to the respiratory chain. The immediate electron acceptor for the enzyme is believed to be ubiquinone. This Beta vulgaris (Sugar beet) protein is NADH dehydrogenase [ubiquinone] iron-sulfur protein 3 (NAD9).